Here is a 25-residue protein sequence, read N- to C-terminus: Small ribosomal subunit protein eS32 (25 aa).

The interval 1-25 (MRAKWRKKRVRRLKRKRRKTRARSK) is disordered.

This sequence belongs to the eukaryotic ribosomal protein eS32 family. As to quaternary structure, component of the small ribosomal subunit.

This is Small ribosomal subunit protein eS32 (RPL41) from Quercus suber (Cork oak).